The primary structure comprises 634 residues: Sodium-dependent neutral amino acid transporter B(0)AT1 (634 aa).

Residues 1 to 41 (MVRLVLPNPGLEERIPSLDELEVIEKEEAGSRPKWDNKAQY) are Cytoplasmic-facing. Ser-17 carries the post-translational modification Phosphoserine. The chain crosses the membrane as a helical span at residues 42-62 (MLTCVGFCVGLGNVWRFPYLC). The Extracellular segment spans residues 63-67 (QSHGG). Residues 68-88 (GAFMIPFLILLVFEGIPLLYL) form a helical membrane-spanning segment. Residues 89–119 (EFAIGQRLRKGSMGVWSSIHPALKGIGIASM) lie on the Cytoplasmic side of the membrane. Residues 120-140 (FVSFMVGLYYNTIIAWVMWYF) form a helical membrane-spanning segment. The Extracellular portion of the chain corresponds to 141 to 192 (FNSFQEPLPWSECPLNQNQTGYVEECAKSSSVDYFWYRETLNISTSISDSGS). Asn-158 and Asn-182 each carry an N-linked (GlcNAc...) asparagine glycan. The helical transmembrane segment at 193 to 213 (IQWWILLCLTCAWSVLYVCII) threads the bilayer. Over 214–221 (RGIETTGK) the chain is Cytoplasmic. The chain crosses the membrane as a helical span at residues 222–242 (AVYITSTLPYVVLTIFLIRGL). Residues 243–268 (TLKGATNGIVFLFTPNITELSNPNTW) are Extracellular-facing. The N-linked (GlcNAc...) asparagine glycan is linked to Asn-258. Residues 269 to 289 (LDAGAQVFYSFSLAFGGLISF) form a helical membrane-spanning segment. The Cytoplasmic segment spans residues 290-304 (SSYNSVHNNCEMDSV). A helical transmembrane segment spans residues 305-325 (IVSVINGFTSVYAATVVYSII). At 326–413 (GFRATERFDD…TEAITKMPVS (88 aa)) the chain is on the extracellular side. Asn-354 and Asn-368 each carry an N-linked (GlcNAc...) asparagine glycan. A helical transmembrane segment spans residues 414–434 (PLWSVLFFIMLFCLGLSSMFG). Topologically, residues 435–456 (NMEGVVVPLQDLNITPKKWPKE) are cytoplasmic. Residues 457 to 477 (LLTGLICLGTYLIAFIFTLNS) traverse the membrane as a helical segment. Over 478 to 487 (GQYWLSLLDS) the chain is Extracellular. Residues 488–508 (FAGSIPLLIIAFCEMFAVVYV) traverse the membrane as a helical segment. Topologically, residues 509–531 (YGVDRFNKDIEFMIGHKPNIFWQ) are cytoplasmic. Residues 532–552 (VTWRVVSPLIMLVIFLFFFVI) traverse the membrane as a helical segment. The Extracellular segment spans residues 553–581 (EVNKTLMYSIWDPNYEEFPKSQKIPYPNW). Residue Asn-555 is glycosylated (N-linked (GlcNAc...) asparagine). A helical membrane pass occupies residues 582–602 (VYAVVVTVAGVPCLSIPCFAI). Residues 603 to 634 (YKFIRNCCQKSDDHHGLVNTLSTASVNGDLKN) lie on the Cytoplasmic side of the membrane. Ser-627 is subject to Phosphoserine.

It belongs to the sodium:neurotransmitter symporter (SNF) (TC 2.A.22) family. SLC6A19 subfamily. In terms of assembly, interacts in a tissue-specific manner with ACE2 in small intestine and with CLTRN in the kidney. Interacts with CLTRN; this interaction is required for trafficking of SLC6A19 to the plasma membrane and for its catalytic activation in kidneys. Interacts with ACE2; this interaction is required for trafficking of SLC6A19 to the plasma membrane and for its catalytic activation in intestine. Interacts with ANPEP; the interaction positively regulates its amino acid transporter activity. In terms of tissue distribution, predominantly expressed in kidney and small intestine (at protein level). Expressed in the intestinal brush border (at protein level). Expression not observed in other organs, such as lung, skeletal muscle, brain, liver and pancreas. In kidney, expression is localized in the renal cortex but not in the medulla. Substantial amounts of expression in the proximal tubules. The distal nephron segments and the glomeruli are consistently negative. In the small intestine, expression is exclusively localized in villus enterocytes. High resolution of the hybridization-positive villi reveals a gradient of expression with the highest levels in apical cells. Not detected in crypt cells or in any other cell types of the small intestine.

Its subcellular location is the cell membrane. The catalysed reaction is L-alanine(in) + Na(+)(in) = L-alanine(out) + Na(+)(out). It catalyses the reaction L-cysteine(in) + Na(+)(in) = L-cysteine(out) + Na(+)(out). The enzyme catalyses L-glutamine(in) + Na(+)(in) = L-glutamine(out) + Na(+)(out). It carries out the reaction glycine(in) + Na(+)(in) = glycine(out) + Na(+)(out). The catalysed reaction is L-isoleucine(in) + Na(+)(in) = L-isoleucine(out) + Na(+)(out). It catalyses the reaction L-leucine(in) + Na(+)(in) = L-leucine(out) + Na(+)(out). The enzyme catalyses L-methionine(in) + Na(+)(in) = L-methionine(out) + Na(+)(out). It carries out the reaction L-phenylalanine(in) + Na(+)(in) = L-phenylalanine(out) + Na(+)(out). The catalysed reaction is L-serine(in) + Na(+)(in) = L-serine(out) + Na(+)(out). It catalyses the reaction L-tryptophan(in) + Na(+)(in) = L-tryptophan(out) + Na(+)(out). The enzyme catalyses L-tyrosine(in) + Na(+)(in) = L-tyrosine(out) + Na(+)(out). It carries out the reaction L-valine(in) + Na(+)(in) = L-valine(out) + Na(+)(out). In terms of biological role, transporter that mediates resorption of neutral amino acids across the apical membrane of renal and intestinal epithelial cells. This uptake is sodium-dependent and chloride-independent. Requires CLTRN in kidney or ACE2 in intestine for cell surface expression and amino acid transporter activity. This chain is Sodium-dependent neutral amino acid transporter B(0)AT1 (Slc6a19), found in Mus musculus (Mouse).